The following is a 404-amino-acid chain: Multidrug resistance protein MdtG (404 aa).

Helical transmembrane passes span 19 to 39 (LGCF…PLYV), 56 to 76 (LVFS…GGLA), 90 to 110 (LGMA…QFLI), 113 to 133 (ALLG…ATQV), 144 to 164 (TLST…GLLA), 171 to 191 (PVFF…FFFI), 222 to 242 (LFVT…ILTL), 254 to 274 (IAFI…LSAP), 288 to 308 (ILIV…FVQT), 317 to 337 (FLLG…LVYN), and 376 to 396 (AVFC…WNSL).

This sequence belongs to the major facilitator superfamily. DHA1 family. MdtG (TC 2.A.1.2.20) subfamily.

The protein localises to the cell inner membrane. This chain is Multidrug resistance protein MdtG, found in Salmonella typhimurium (strain LT2 / SGSC1412 / ATCC 700720).